The following is a 260-amino-acid chain: Snake venom serine proteinase 12 (260 aa).

Positions 1–18 (MVLIRVLANLLILQLSYA) are cleaved as a signal peptide. Residues 19-24 (QKSSEL) constitute a propeptide that is removed on maturation. The region spanning 25–251 (VIGGDECNIN…HLDWIQSIIA (227 aa)) is the Peptidase S1 domain. 6 disulfides stabilise this stretch: cysteine 31/cysteine 163, cysteine 50/cysteine 66, cysteine 98/cysteine 258, cysteine 142/cysteine 212, cysteine 174/cysteine 191, and cysteine 202/cysteine 227. Histidine 65 acts as the Charge relay system in catalysis. The N-linked (GlcNAc...) asparagine glycan is linked to asparagine 103. The Charge relay system role is filled by aspartate 110. The Charge relay system role is filled by serine 206.

This sequence belongs to the peptidase S1 family. Snake venom subfamily. As to quaternary structure, monomer. In terms of tissue distribution, expressed by the venom gland.

It localises to the secreted. In terms of biological role, snake venom serine protease that may act in the hemostasis system of the prey. This chain is Snake venom serine proteinase 12, found in Crotalus adamanteus (Eastern diamondback rattlesnake).